Reading from the N-terminus, the 362-residue chain is Talin rod domain-containing protein 1 (362 aa).

A disordered region spans residues 1–26 (MASGSAGKPTGEAASPAPASAIGGAS). An N-acetylalanine modification is found at A2. Positions 13–26 (AASPAPASAIGGAS) are enriched in low complexity.

May homodimerize. Interacts with F-actin.

Its function is as follows. Actin-binding protein which may have an oncogenic function and regulates cell proliferation, migration and invasion in cancer cells. This Homo sapiens (Human) protein is Talin rod domain-containing protein 1.